We begin with the raw amino-acid sequence, 702 residues long: Polyribonucleotide nucleotidyltransferase (702 aa).

Mg(2+) contacts are provided by aspartate 485 and aspartate 491. The KH domain occupies 552–612; sequence PRTEIICIDP…EGVKKAISII (61 aa). In terms of domain architecture, S1 motif spans 622-690; that stretch reads GEIYLGKVTK…NQGRINLSRK (69 aa).

This sequence belongs to the polyribonucleotide nucleotidyltransferase family. Mg(2+) is required as a cofactor.

The protein resides in the cytoplasm. It catalyses the reaction RNA(n+1) + phosphate = RNA(n) + a ribonucleoside 5'-diphosphate. Involved in mRNA degradation. Catalyzes the phosphorolysis of single-stranded polyribonucleotides processively in the 3'- to 5'-direction. The sequence is that of Polyribonucleotide nucleotidyltransferase from Clostridium botulinum (strain Langeland / NCTC 10281 / Type F).